The following is a 364-amino-acid chain: Anhydro-N-acetylmuramic acid kinase (364 aa).

Residue 11–18 (GSSLDGID) participates in ATP binding.

The protein belongs to the anhydro-N-acetylmuramic acid kinase family.

It catalyses the reaction 1,6-anhydro-N-acetyl-beta-muramate + ATP + H2O = N-acetyl-D-muramate 6-phosphate + ADP + H(+). The protein operates within amino-sugar metabolism; 1,6-anhydro-N-acetylmuramate degradation. It participates in cell wall biogenesis; peptidoglycan recycling. In terms of biological role, catalyzes the specific phosphorylation of 1,6-anhydro-N-acetylmuramic acid (anhMurNAc) with the simultaneous cleavage of the 1,6-anhydro ring, generating MurNAc-6-P. Is required for the utilization of anhMurNAc either imported from the medium or derived from its own cell wall murein, and thus plays a role in cell wall recycling. This is Anhydro-N-acetylmuramic acid kinase from Pseudomonas savastanoi pv. phaseolicola (strain 1448A / Race 6) (Pseudomonas syringae pv. phaseolicola (strain 1448A / Race 6)).